The primary structure comprises 362 residues: Transcription factor Sox-18 (362 aa).

Residues 1-13 are compositionally biased toward basic and acidic residues; it reads MHRPEPSYCREEP. The disordered stretch occupies residues 1-68; it reads MHRPEPSYCR…CEEKPGDPRI (68 aa). Over residues 37–51 the composition is skewed to pro residues; that stretch reads PSSPPAPDSPTPSPQ. Residues 59 to 68 are compositionally biased toward basic and acidic residues; it reads CEEKPGDPRI. The HMG box DNA-binding region spans 68–136; the sequence is IRRPMNAFMV…QHLQDHPNYK (69 aa). Interaction with DNA regions lie at residues 70-83 and 94-106; these read RPMNAFMVWAKDER and HNAVLSKMLGQSW. The segment at 129–159 is disordered; the sequence is LQDHPNYKYRPRRKKQAKKLKRVDPSPLLRN. Positions 135–149 are enriched in basic residues; the sequence is YKYRPRRKKQAKKLK. The interval 149-209 is important for transcriptional activation; that stretch reads KRVDPSPLLR…VVEPSEPAFF (61 aa). Positions 235 to 361 constitute a Sox C-terminal domain; it reads KTLREISLPY…TAMYYTPCIT (127 aa). Positions 307–315 match the 9aaTAD motif; sequence NEFDQYLNM.

It localises to the nucleus. Its function is as follows. Transcription factor. Binds to the consensus DNA sequence 5'-AACAAT-3'. Also binds 5'-CACAAT-3' and 5'-AATAAT-3' but with a lower affinity. Acts partially redundantly with sox7 during cardiogenesis, acting indirectly through nodal-signaling to induce mesodermal, organizer and endodermal tissues, which then interact to initiate cardiogenesis. Also acts as an antagonist of beta-catenin signaling. The protein is Transcription factor Sox-18 of Xenopus tropicalis (Western clawed frog).